A 471-amino-acid polypeptide reads, in one-letter code: Cell division protein FtsP (471 aa).

Residues 1–27 (MSLNRRQFIQASGLALCAGMTPLAAKA) constitute a signal peptide (tat-type signal). The region spanning 229-287 (VRLRLLNASNSRRYVMRLSDGRAMNVIASDQGLLPAPMAVNQLSLAPGERREILIDMSQ) is the Plastocyanin-like domain.

It belongs to the FtsP family. Predicted to be exported by the Tat system. The position of the signal peptide cleavage has not been experimentally proven.

It is found in the periplasm. Cell division protein that is required for growth during stress conditions. May be involved in protecting or stabilizing the divisomal assembly under conditions of stress. This chain is Cell division protein FtsP, found in Pectobacterium atrosepticum (strain SCRI 1043 / ATCC BAA-672) (Erwinia carotovora subsp. atroseptica).